The chain runs to 116 residues: G antigen 2D (116 aa).

The interval M1–C116 is disordered. Acidic residues-rich tracts occupy residues F31 to E44 and E86 to E95. Over residues E102–C116 the composition is skewed to basic and acidic residues.

This sequence belongs to the GAGE family. As to expression, not expressed in normal tissues, except in testis, but expressed by a large proportion of tumors of various histological origins.

The polypeptide is G antigen 2D (GAGE2D) (Homo sapiens (Human)).